A 671-amino-acid polypeptide reads, in one-letter code: cGMP-dependent protein kinase 1 (671 aa).

An N-acetylserine modification is found at S2. Positions 2-59 form a coiled coil; it reads SELEEDFAKILMLKEERIKELEKRLSEKEEEIQELKRKLHKCQSVLPVPSTHIGPRTT. The tract at residues 2–102 is required for dimerization; that stretch reads SELEEDFAKI…LIKEAILDND (101 aa). Positions 9–44 are leucine-zipper; that stretch reads AKILMLKEERIKELEKRLSEKEEEIQELKRKLHKCQ. The autoinhibitory domain stretch occupies residues 50-75; the sequence is PSTHIGPRTTRAQGISAEPQTYRSFH. Position 59 is a phosphothreonine; by autocatalysis (T59). The segment at 103-220 is cGMP-binding, high affinity; it reads FMKNLELSQI…EYMEFLKSVP (118 aa). 3',5'-cyclic AMP is bound by residues 167–170 and 177–178; these read GELA and RT. 3',5'-cyclic GMP contacts are provided by residues 167–170, 177–178, R282, 291–294, 301–302, and Y336; these read GELA, RT, and GEKA. Residues 221-341 are cGMP-binding, low affinity; it reads TFQSLPEEIL…SNKAYEDAEA (121 aa). 3',5'-cyclic AMP is bound by residues 291-294, 301-302, and Y336; these read GEKA and RT. The 260-residue stretch at 360–619 folds into the Protein kinase domain; that stretch reads FNIIDTLGVG…VKDIQKHKWF (260 aa). ATP contacts are provided by residues 366-374 and K390; that span reads LGVGGFGRV. D484 functions as the Proton acceptor in the catalytic mechanism. T515 is subject to Phosphothreonine. Positions 620–671 constitute an AGC-kinase C-terminal domain; that stretch reads EGFNWEGLRKGTLTPPIIPSVASPTDTSNFDSFPEDNDEPPPDDNSGWDIDF. Residues 635–671 form a disordered region; the sequence is PIIPSVASPTDTSNFDSFPEDNDEPPPDDNSGWDIDF. Positions 652–661 are enriched in acidic residues; it reads FPEDNDEPPP.

It belongs to the protein kinase superfamily. AGC Ser/Thr protein kinase family. cGMP subfamily. As to quaternary structure, isoform alpha: parallel homodimer or heterodimer and also heterotetramer. Interacts directly with PPP1R12A. Non-covalent dimer of dimer of PRKG1-PRKG1 and PPP1R12A-PPP1R12A. This interaction targets PRKG1 to stress fibers to mediate smooth muscle cell relaxation and vasodilation in responses to rises in cGMP. Isoform beta: antiparallel homodimer. Part of cGMP kinase signaling complex at least composed of ACTA2/alpha-actin, CNN1/calponin H1, PLN/phospholamban, PRKG1 and ITPR1. Interacts with IRAG1. Forms a stable complex with ITPR1, IRAG1, and isoform beta of PRKG1. Interacts with TRPC7 (via ankyrin repeat domain). Isoform alpha interacts with RGS2. Interacts with GTF2I. Autophosphorylation increases kinase activity. In terms of processing, 65 kDa monomer is produced by proteolytic cleavage. In terms of tissue distribution, primarily expressed in lung and placenta.

The protein localises to the cytoplasm. It carries out the reaction L-seryl-[protein] + ATP = O-phospho-L-seryl-[protein] + ADP + H(+). The enzyme catalyses L-threonyl-[protein] + ATP = O-phospho-L-threonyl-[protein] + ADP + H(+). Its activity is regulated as follows. In the absence of cGMP, PRKG1 activity is suppressed by autoinhibitory contacts. Serine/threonine protein kinase that acts as a key mediator of the nitric oxide (NO)/cGMP signaling pathway. GMP binding activates PRKG1, which phosphorylates serines and threonines on many cellular proteins. Numerous protein targets for PRKG1 phosphorylation are implicated in modulating cellular calcium, but the contribution of each of these targets may vary substantially among cell types. Proteins that are phosphorylated by PRKG1 regulate platelet activation and adhesion, smooth muscle contraction, cardiac function, gene expression, feedback of the NO-signaling pathway, and other processes involved in several aspects of the CNS like axon guidance, hippocampal and cerebellar learning, circadian rhythm and nociception. Smooth muscle relaxation is mediated through lowering of intracellular free calcium, by desensitization of contractile proteins to calcium, and by decrease in the contractile state of smooth muscle or in platelet activation. Regulates intracellular calcium levels via several pathways: phosphorylates IRAG1 and inhibits IP3-induced Ca(2+) release from intracellular stores, phosphorylation of KCNMA1 (BKCa) channels decreases intracellular Ca(2+) levels, which leads to increased opening of this channel. PRKG1 phosphorylates the canonical transient receptor potential channel (TRPC) family which inactivates the associated inward calcium current. Another mode of action of NO/cGMP/PKGI signaling involves PKGI-mediated inactivation of the Ras homolog gene family member A (RhoA). Phosphorylation of RHOA by PRKG1 blocks the action of this protein in myriad processes: regulation of RHOA translocation; decreasing contraction; controlling vesicle trafficking, reduction of myosin light chain phosphorylation resulting in vasorelaxation. Activation of PRKG1 by NO signaling also alters gene expression in a number of tissues. In smooth muscle cells, increased cGMP and PRKG1 activity influence expression of smooth muscle-specific contractile proteins, levels of proteins in the NO/cGMP signaling pathway, down-regulation of the matrix proteins osteopontin and thrombospondin-1 to limit smooth muscle cell migration and phenotype. Regulates vasodilator-stimulated phosphoprotein (VASP) functions in platelets and smooth muscle. The chain is cGMP-dependent protein kinase 1 (PRKG1) from Homo sapiens (Human).